Reading from the N-terminus, the 450-residue chain is Phosphoglucosamine mutase (450 aa).

Ser101 acts as the Phosphoserine intermediate in catalysis. The Mg(2+) site is built by Ser101, Asp241, Asp243, and Asp245. At Ser101 the chain carries Phosphoserine.

The protein belongs to the phosphohexose mutase family. It depends on Mg(2+) as a cofactor. Post-translationally, activated by phosphorylation.

The enzyme catalyses alpha-D-glucosamine 1-phosphate = D-glucosamine 6-phosphate. Its function is as follows. Catalyzes the conversion of glucosamine-6-phosphate to glucosamine-1-phosphate. The sequence is that of Phosphoglucosamine mutase from Ligilactobacillus salivarius (strain UCC118) (Lactobacillus salivarius).